Reading from the N-terminus, the 331-residue chain is 3-dehydrosphinganine reductase TSC10B (331 aa).

Residues 1 to 7 (MAAIFSL) are Lumenal-facing. The chain crosses the membrane as a helical span at residues 8-28 (FLFFILFIVSLLIILSFIVRP). The Cytoplasmic segment spans residues 29-262 (RSVTIPIKFR…ICFDGIKAGK (234 aa)). NADPH contacts are provided by glycine 44, serine 46, serine 47, glycine 48, arginine 69, lysine 73, and aspartate 95. A GXSXG motif is present at residues 44–48 (GGSSG). Serine 172 serves as the catalytic Proton donor. The active-site Proton acceptor is the tyrosine 186. Tyrosine 186 and lysine 190 together coordinate NADP(+). The active-site Lowers pKa of active site Tyr is lysine 190. The helical transmembrane segment at 263-283 (FTVTCHFIGFLLSIASTGMSP) threads the bilayer. The Lumenal segment spans residues 284 to 286 (QGS). A helical transmembrane segment spans residues 287–307 (FWLALTEVMFGGLIRLASLVF). Topologically, residues 308–331 (QWQWYKTIEKWSQRNKKEVNSKLA) are cytoplasmic.

Belongs to the short-chain dehydrogenases/reductases (SDR) family. In terms of tissue distribution, expressed in roots, leaves, stems and flowers.

The protein resides in the endoplasmic reticulum membrane. The enzyme catalyses sphinganine + NADP(+) = 3-oxosphinganine + NADPH + H(+). It participates in lipid metabolism; sphingolipid metabolism. Functionally, catalyzes the reduction of 3'-oxosphinganine (3-ketodihydrosphingosine/KDS) to sphinganine (dihydrosphingosine/DHS), the second step of de novo sphingolipid biosynthesis. In plants, sphingolipids seems to play a critical role in mineral ion homeostasis, most likely through their involvement in the ion transport functionalities of membrane systems in the root. Is stereospecific for D-erythro-DHS production and does not produce L-threo-DHS. The sequence is that of 3-dehydrosphinganine reductase TSC10B (TSC10B) from Arabidopsis thaliana (Mouse-ear cress).